A 226-amino-acid chain; its full sequence is Clarin-3 (226 aa).

Residues 8 to 28 (LMFLSGFLTSLGSVVVICSIL) traverse the membrane as a helical segment. N-linked (GlcNAc...) asparagine glycosylation occurs at Asn-46. Transmembrane regions (helical) follow at residues 92–112 (VVIL…VFTF), 128–148 (GVYT…VLFV), and 181–201 (FWLT…IIFY).

Belongs to the clarin family.

The protein resides in the membrane. The chain is Clarin-3 (Clrn3) from Mus musculus (Mouse).